Reading from the N-terminus, the 155-residue chain is MRLRLIAVGSRMPKWVEEGWHEYAKRMPSELALELVEIPLNTRGKNADVARFIRQEGEAMLAKVQPGERIVTLEVHGKPWSTEQLAVELDRWRLDARTVNLMVGGPEGLAPEVCARSEQRWSLSPLTLPHPLVRILIGEQMYRAWTVLSGHPYHK.

S-adenosyl-L-methionine contacts are provided by residues leucine 73, glycine 104, and 123–128 (LSPLTL).

It belongs to the RNA methyltransferase RlmH family. As to quaternary structure, homodimer.

Its subcellular location is the cytoplasm. The catalysed reaction is pseudouridine(1915) in 23S rRNA + S-adenosyl-L-methionine = N(3)-methylpseudouridine(1915) in 23S rRNA + S-adenosyl-L-homocysteine + H(+). Its function is as follows. Specifically methylates the pseudouridine at position 1915 (m3Psi1915) in 23S rRNA. The polypeptide is Ribosomal RNA large subunit methyltransferase H (Pseudomonas savastanoi pv. phaseolicola (strain 1448A / Race 6) (Pseudomonas syringae pv. phaseolicola (strain 1448A / Race 6))).